Consider the following 276-residue polypeptide: MGTDTVMSGRVRKDLSKTNPNGNIPENRSNSRKKIQRRSKKTLICPVQKLFDTCKKVFADGKSGTVPSQENIEMLRAVLDEIKPEDVGVNPKMSYFRSTVTGRSPLVTYLHIYACHRFSICIFCLPPSGVIPLHNHPEMTVFSKLLFGTMHIKSYDWVPDSPQPSSDTRLAKVKVDSDFTAPCDTSILYPADGGNMHCFTAKTACAVLDVIGPPYSDPAGRHCTYYFDYPFSSFSVDGVVVAEEEKEGYAWLKEREEKPEDLTVTALMYSGPTIKE.

Positions 1-40 are disordered; it reads MGTDTVMSGRVRKDLSKTNPNGNIPENRSNSRKKIQRRSK. A compositionally biased stretch (polar residues) spans 17-28; it reads KTNPNGNIPENR. Basic residues predominate over residues 30–40; the sequence is NSRKKIQRRSK. His-134, His-136, and His-197 together coordinate Fe cation.

Belongs to the cysteine dioxygenase family. The cofactor is Fe(2+).

The protein localises to the nucleus. Its subcellular location is the cytoplasm. The catalysed reaction is L-cysteine + O2 = 3-sulfino-L-alanine + H(+). Its function is as follows. Catalyzes the oxidation of N-terminal cysteine residues (N-Cys), thus preparing the protein for N-end rule pathway-mediated proteasomal degradation, upstream of the N-end rule enzymes ATE1, ATE2 and PRT6. Controls the preparation of the group VII ethylene response factor (ERF-VII) proteins for degradation via the 26S proteasome N-end rule pathway. Acts as an oxygen sensor that controls the stability of ERF-VII proteins, which are stabilized in flooding-induced hypoxia, and regulate transcriptional adaptation to these adverse conditions. Not active on Cys located inside or at the C-terminus of a peptide. Acts redundantly with PCO1 to repress the anaerobic response. This Arabidopsis thaliana (Mouse-ear cress) protein is Plant cysteine oxidase 2.